Consider the following 239-residue polypeptide: Large ribosomal subunit protein uL1 (239 aa).

It belongs to the universal ribosomal protein uL1 family. As to quaternary structure, part of the 50S ribosomal subunit.

Functionally, binds directly to 23S rRNA. The L1 stalk is quite mobile in the ribosome, and is involved in E site tRNA release. Protein L1 is also a translational repressor protein, it controls the translation of the L11 operon by binding to its mRNA. The protein is Large ribosomal subunit protein uL1 of Rickettsia canadensis (strain McKiel).